The chain runs to 4911 residues: Histone-lysine N-methyltransferase 2C (4911 aa).

The tract at residues methionine 1–serine 101 is disordered. Over residues proline 12–serine 28 the composition is skewed to pro residues. Serine 28 and serine 46 each carry phosphoserine. The a.T hook DNA-binding region spans lysine 34–serine 46. Positions arginine 50–glycine 59 are enriched in basic residues. Positions glutamate 64 to valine 81 are enriched in acidic residues. Serine 89 bears the Phosphoserine mark. Positions glutamate 92 to valine 112 form a coiled coil. At serine 113 the chain carries Phosphoserine. The segment at arginine 164 to glutamine 203 is disordered. Residues asparagine 176–proline 189 are compositionally biased toward polar residues. Serine 200 is subject to Phosphoserine. Residues glutamate 227 to valine 262 form a C2HC pre-PHD-type 1; degenerate zinc finger. 4 PHD-type zinc fingers span residues glutamate 283–isoleucine 331, aspartate 341–cysteine 391, cysteine 388–cysteine 438, and aspartate 464–leucine 520. An RING-type zinc finger spans residues cysteine 344–lysine 389. Positions arginine 436–lysine 489 constitute a DHHC domain. Residues glutamate 644 to glutamate 672 are a coiled coil. Over residues glutamine 721–serine 730 the composition is skewed to basic and acidic residues. Positions glutamine 721–threonine 742 are disordered. Residue lysine 758 is modified to N6-acetyllysine. Low complexity predominate over residues serine 763–leucine 791. Disordered regions lie at residues serine 763–histidine 798, proline 828–glutamate 864, and glycine 885–leucine 912. Residues isoleucine 830–serine 842 show a composition bias toward basic residues. Over residues glycine 845 to proline 856 the composition is skewed to polar residues. Phosphoserine is present on serine 854. 3 consecutive PHD-type zinc fingers follow at residues glutamine 957–cysteine 1010, cysteine 1007–cysteine 1057, and leucine 1084–tyrosine 1139. Positions alanine 1215–glutamate 1324 are disordered. Over residues glutamine 1224 to valine 1270 the composition is skewed to basic and acidic residues. The residue at position 1301 (serine 1301) is a Phosphoserine. Residues threonine 1338–alanine 1366 adopt a coiled-coil conformation. The segment covering proline 1406–serine 1416 has biased composition (low complexity). Disordered regions lie at residues proline 1406–leucine 1431 and histidine 1458–glutamate 1485. Residues aspartate 1467 to proline 1482 show a composition bias toward polar residues. N6-acetyllysine is present on lysine 1508. 2 disordered regions span residues phenylalanine 1604 to serine 1630 and valine 1709 to alanine 2448. 2 stretches are compositionally biased toward polar residues: residues aspartate 1610–proline 1620 and valine 1709–proline 1727. A compositionally biased stretch (basic and acidic residues) spans serine 1729–phenylalanine 1753. Residues arginine 1754–glutamine 1787 adopt a coiled-coil conformation. Residue lysine 1772 is modified to N6-acetyllysine. Residues phenylalanine 1788–glutamine 1823 are compositionally biased toward polar residues. The span at glutamine 1851–serine 1860 shows a compositional bias: pro residues. Over residues arginine 1861–glutamine 1875 the composition is skewed to low complexity. Positions threonine 1927–arginine 1945 are enriched in polar residues. Serine 1987 is modified (phosphoserine). Lysine 2009 bears the N6-acetyllysine mark. 4 stretches are compositionally biased toward polar residues: residues glutamine 2054 to arginine 2065, phenylalanine 2085 to tyrosine 2094, alanine 2115 to tyrosine 2131, and serine 2144 to tyrosine 2159. A compositionally biased stretch (low complexity) spans proline 2173 to threonine 2187. Composition is skewed to polar residues over residues serine 2302 to alanine 2319, cysteine 2335 to serine 2353, and serine 2362 to glutamine 2375. Over residues aspartate 2377–glutamate 2389 the composition is skewed to basic and acidic residues. A compositionally biased stretch (low complexity) spans isoleucine 2390–lysine 2399. 2 positions are modified to asymmetric dimethylarginine: arginine 2454 and arginine 2571. Disordered stretches follow at residues arginine 2589 to proline 2694, glutamate 2793 to alanine 2887, glutamate 2925 to leucine 2954, and valine 2989 to glutamine 3029. Composition is skewed to polar residues over residues proline 2629–valine 2645 and proline 2661–serine 2682. Basic and acidic residues predominate over residues glutamate 2793 to serine 2811. N6-acetyllysine occurs at positions 2802 and 2809. Over residues lysine 2814–lysine 2832 the composition is skewed to polar residues. Serine 2828 is modified (phosphoserine). Residue lysine 2832 is modified to N6-acetyllysine. The segment covering valine 2833–valine 2849 has biased composition (basic and acidic residues). A compositionally biased stretch (polar residues) spans threonine 2851–serine 2860. Over residues aspartate 2861 to arginine 2884 the composition is skewed to basic and acidic residues. Lysine 2867 carries the post-translational modification N6-acetyllysine. Low complexity predominate over residues threonine 3011–glutamine 3029. 3 coiled-coil regions span residues leucine 3054 to glutamate 3081, asparagine 3173 to glutamine 3272, and phenylalanine 3391 to glutamine 3433. Positions histidine 3205–lysine 3221 are enriched in basic residues. 5 disordered regions span residues histidine 3205–glutamine 3241, proline 3353–glutamate 3409, proline 3527–proline 3583, isoleucine 3596–glycine 3919, and valine 4024–asparagine 4053. 2 stretches are compositionally biased toward basic and acidic residues: residues alanine 3222–threonine 3238 and phenylalanine 3395–glutamate 3409. 4 stretches are compositionally biased toward polar residues: residues proline 3527–valine 3549, alanine 3564–proline 3583, isoleucine 3637–glutamine 3658, and leucine 3684–asparagine 3701. Residues glutamate 3703–threonine 3725 show a composition bias toward basic and acidic residues. An N6-acetyllysine modification is found at lysine 3714. Phosphoserine is present on serine 3758. Positions aspartate 3803–glutamate 3812 are enriched in basic and acidic residues. Positions methionine 3878–asparagine 3892 are enriched in polar residues. Residues proline 3897–methionine 3911 show a composition bias toward pro residues. Serine 4034 is subject to Phosphoserine. Arginine 4139 bears the Asymmetric dimethylarginine mark. Serine 4267 carries the post-translational modification Phosphoserine. Residues tyrosine 4399–valine 4439 form a C2HC pre-PHD-type 2 zinc finger. The PHD-type 8 zinc-finger motif lies at methionine 4460 to lysine 4507. The 61-residue stretch at aspartate 4545 to lysine 4605 folds into the FYR N-terminal domain. The FYR C-terminal domain maps to aspartate 4606–tyrosine 4691. The WDR5 interaction motif (WIN) signature appears at glycine 4707 to glutamate 4712. The SET domain occupies serine 4771 to lysine 4887. Residues tyrosine 4825 and asparagine 4848 to histidine 4849 each bind S-adenosyl-L-methionine. Zn(2+) is bound by residues cysteine 4851, cysteine 4899, cysteine 4901, and cysteine 4906. Positions histidine 4895–asparagine 4911 constitute a Post-SET domain.

The protein belongs to the class V-like SAM-binding methyltransferase superfamily. Histone-lysine methyltransferase family. TRX/MLL subfamily. Component of the MLL3 complex (also named ASCOM complex), at least composed of catalytic subunit KMT2C/MLL3, ASH2L, RBBP5, WDR5, NCOA6, DPY30, KDM6A, PAXIP1/PTIP, PAGR1 and alpha- and beta-tubulin. Forms a core complex with the evolutionary conserved subcomplex WRAD composed of WDR5, RBBP5, ASH2L/ASH2 and DPY30 subunits; WRAD differentially stimulates the methyltransferase activity. Interacts (via WIN motif) with WDR5. As to expression, highly expressed in testis and ovary, followed by brain and liver. Also expressed in placenta, peripherical blood, fetal thymus, heart, lung and kidney. Within brain, expression was highest in hippocampus, caudate nucleus, and substantia nigra. Not detected in skeletal muscle and fetal liver.

It localises to the nucleus. The enzyme catalyses L-lysyl(4)-[histone H3] + S-adenosyl-L-methionine = N(6)-methyl-L-lysyl(4)-[histone H3] + S-adenosyl-L-homocysteine + H(+). Histone methyltransferase that catalyzes methyl group transfer from S-adenosyl-L-methionine to the epsilon-amino group of 'Lys-4' of histone H3 (H3K4). Part of chromatin remodeling machinery predominantly forms H3K4me1 methylation marks at active chromatin sites where transcription and DNA repair take place. Likely plays a redundant role with KMT2D in enriching H3K4me1 mark on primed and active enhancer elements. The sequence is that of Histone-lysine N-methyltransferase 2C (KMT2C) from Homo sapiens (Human).